The chain runs to 476 residues: MDFEAVIGLEVHAELSTNTKIYCGCTTEFGGQPNTHVCPICLGLPGSLPQLNKRVVEYGIKAGLALNCSINKVCRMDRKNYFYPDCPKNYQITQDEVPICRDGYIEIELENGEKKKIGIERIHMEEDAGKLLHTNAGTLVDYNRAGVPLIEIVSRPDIRTPEEATKYLEKLKSILSSIEVSDCKMEQGSLRCDGNISVRPVGSEKFGVRSEIKNMNSFKALEKALSYEYDRHVEAVTKGEILEQETRRWDEANSVTVLMRSKEKANDYRYFPEGDLVTLNISDEWIEEVRKTIPELPHEKAERFVNEFGIPKYDAMVLTLTMDMAKFFEETAVKSEDAKAASNWLMGDISRLMNEKTIEVKDLKFNPEQLAQLIKLINARTISNNIGKKVLDDMFKSGKNPKDIVEEKGLVQNNDEGAILEVVKKIIENNPQSIEDFKNGKKRALGFLVGLVMKETKGKANPQIVNKLVSEEANKM.

Belongs to the GatB/GatE family. GatB subfamily. Heterotrimer of A, B and C subunits.

It catalyses the reaction L-glutamyl-tRNA(Gln) + L-glutamine + ATP + H2O = L-glutaminyl-tRNA(Gln) + L-glutamate + ADP + phosphate + H(+). The enzyme catalyses L-aspartyl-tRNA(Asn) + L-glutamine + ATP + H2O = L-asparaginyl-tRNA(Asn) + L-glutamate + ADP + phosphate + 2 H(+). Functionally, allows the formation of correctly charged Asn-tRNA(Asn) or Gln-tRNA(Gln) through the transamidation of misacylated Asp-tRNA(Asn) or Glu-tRNA(Gln) in organisms which lack either or both of asparaginyl-tRNA or glutaminyl-tRNA synthetases. The reaction takes place in the presence of glutamine and ATP through an activated phospho-Asp-tRNA(Asn) or phospho-Glu-tRNA(Gln). The sequence is that of Aspartyl/glutamyl-tRNA(Asn/Gln) amidotransferase subunit B from Clostridium botulinum (strain 657 / Type Ba4).